Consider the following 485-residue polypeptide: Glycogen synthase (485 aa).

Lys15 is an ADP-alpha-D-glucose binding site.

This sequence belongs to the glycosyltransferase 1 family. Bacterial/plant glycogen synthase subfamily.

It catalyses the reaction [(1-&gt;4)-alpha-D-glucosyl](n) + ADP-alpha-D-glucose = [(1-&gt;4)-alpha-D-glucosyl](n+1) + ADP + H(+). It participates in glycan biosynthesis; glycogen biosynthesis. Synthesizes alpha-1,4-glucan chains using ADP-glucose. This is Glycogen synthase (glgA) from Geobacillus stearothermophilus (Bacillus stearothermophilus).